Consider the following 350-residue polypeptide: Uroporphyrinogen decarboxylase (350 aa).

Substrate contacts are provided by residues 28 to 32 (RQAGR), Asp-78, Tyr-154, Thr-209, and His-325.

Belongs to the uroporphyrinogen decarboxylase family. As to quaternary structure, homodimer.

It localises to the cytoplasm. The catalysed reaction is uroporphyrinogen III + 4 H(+) = coproporphyrinogen III + 4 CO2. It functions in the pathway porphyrin-containing compound metabolism; protoporphyrin-IX biosynthesis; coproporphyrinogen-III from 5-aminolevulinate: step 4/4. Its function is as follows. Catalyzes the decarboxylation of four acetate groups of uroporphyrinogen-III to yield coproporphyrinogen-III. In Nitrobacter hamburgensis (strain DSM 10229 / NCIMB 13809 / X14), this protein is Uroporphyrinogen decarboxylase.